Here is a 288-residue protein sequence, read N- to C-terminus: Nucleotide-binding protein Neut_1559 (288 aa).

8-15 (GLSGSGKS) contacts ATP. A GTP-binding site is contributed by 57-60 (DMRS).

It belongs to the RapZ-like family.

Displays ATPase and GTPase activities. This Nitrosomonas eutropha (strain DSM 101675 / C91 / Nm57) protein is Nucleotide-binding protein Neut_1559.